The chain runs to 285 residues: Small ribosomal subunit biogenesis GTPase RsgA (285 aa).

A CP-type G domain is found at Lys61–Phe215. GTP contacts are provided by residues Thr110–Asp113 and Gly159–Ser167. The Zn(2+) site is built by Cys239, Cys244, His246, and Cys254.

Belongs to the TRAFAC class YlqF/YawG GTPase family. RsgA subfamily. As to quaternary structure, monomer. Associates with 30S ribosomal subunit, binds 16S rRNA. Zn(2+) is required as a cofactor.

The protein localises to the cytoplasm. Its function is as follows. One of several proteins that assist in the late maturation steps of the functional core of the 30S ribosomal subunit. Helps release RbfA from mature subunits. May play a role in the assembly of ribosomal proteins into the subunit. Circularly permuted GTPase that catalyzes slow GTP hydrolysis, GTPase activity is stimulated by the 30S ribosomal subunit. The sequence is that of Small ribosomal subunit biogenesis GTPase RsgA from Mesomycoplasma hyopneumoniae (strain 7448) (Mycoplasma hyopneumoniae).